A 1041-amino-acid chain; its full sequence is FHIP family protein GF15501 (1041 aa).

Disordered regions lie at residues arginine 797–arginine 856 and serine 907–valine 987. A Phosphoserine modification is found at serine 803. The segment covering asparagine 808 to glutamine 824 has biased composition (low complexity). Polar residues-rich tracts occupy residues arginine 825–serine 843 and serine 907–glutamine 933. Positions serine 942–histidine 973 are enriched in low complexity.

The protein belongs to the FHIP family.

This Drosophila ananassae (Fruit fly) protein is FHIP family protein GF15501.